Consider the following 1208-residue polypeptide: DNA-directed RNA polymerase subunit beta (1208 aa).

A disordered region spans residues 1182-1208 (EKKAAEQVEDEKDDVIQNFETAEDNLD).

It belongs to the RNA polymerase beta chain family. As to quaternary structure, the RNAP catalytic core consists of 2 alpha, 1 beta, 1 beta' and 1 omega subunit. When a sigma factor is associated with the core the holoenzyme is formed, which can initiate transcription.

The enzyme catalyses RNA(n) + a ribonucleoside 5'-triphosphate = RNA(n+1) + diphosphate. Its function is as follows. DNA-dependent RNA polymerase catalyzes the transcription of DNA into RNA using the four ribonucleoside triphosphates as substrates. The protein is DNA-directed RNA polymerase subunit beta of Enterococcus faecium (Streptococcus faecium).